The sequence spans 141 residues: ATP synthase epsilon chain (141 aa).

It belongs to the ATPase epsilon chain family. In terms of assembly, F-type ATPases have 2 components, CF(1) - the catalytic core - and CF(0) - the membrane proton channel. CF(1) has five subunits: alpha(3), beta(3), gamma(1), delta(1), epsilon(1). CF(0) has three main subunits: a, b and c.

It localises to the cell inner membrane. In terms of biological role, produces ATP from ADP in the presence of a proton gradient across the membrane. This Pseudomonas aeruginosa (strain LESB58) protein is ATP synthase epsilon chain.